Consider the following 307-residue polypeptide: Ornithine carbamoyltransferase (307 aa).

Residues 56–59 (STRT), Gln-83, Arg-107, and 134–137 (HPCQ) contribute to the carbamoyl phosphate site. L-ornithine-binding positions include Asn-165, Asp-223, and 227–228 (SM). Carbamoyl phosphate is bound by residues 263-264 (CL) and Arg-291.

This sequence belongs to the aspartate/ornithine carbamoyltransferase superfamily. OTCase family.

The protein resides in the cytoplasm. The catalysed reaction is carbamoyl phosphate + L-ornithine = L-citrulline + phosphate + H(+). The protein operates within amino-acid biosynthesis; L-arginine biosynthesis; L-arginine from L-ornithine and carbamoyl phosphate: step 1/3. Functionally, reversibly catalyzes the transfer of the carbamoyl group from carbamoyl phosphate (CP) to the N(epsilon) atom of ornithine (ORN) to produce L-citrulline. The polypeptide is Ornithine carbamoyltransferase (Cupriavidus metallidurans (strain ATCC 43123 / DSM 2839 / NBRC 102507 / CH34) (Ralstonia metallidurans)).